The chain runs to 70 residues: ATP synthase subunit c (70 aa).

2 helical membrane-spanning segments follow: residues 4 to 24 and 45 to 65; these read IAAA…NGLI and LMFI…VIAF.

Belongs to the ATPase C chain family. F-type ATPases have 2 components, F(1) - the catalytic core - and F(0) - the membrane proton channel. F(1) has five subunits: alpha(3), beta(3), gamma(1), delta(1), epsilon(1). F(0) has three main subunits: a(1), b(2) and c(10-14). The alpha and beta chains form an alternating ring which encloses part of the gamma chain. F(1) is attached to F(0) by a central stalk formed by the gamma and epsilon chains, while a peripheral stalk is formed by the delta and b chains.

It localises to the cell membrane. Its function is as follows. F(1)F(0) ATP synthase produces ATP from ADP in the presence of a proton or sodium gradient. F-type ATPases consist of two structural domains, F(1) containing the extramembraneous catalytic core and F(0) containing the membrane proton channel, linked together by a central stalk and a peripheral stalk. During catalysis, ATP synthesis in the catalytic domain of F(1) is coupled via a rotary mechanism of the central stalk subunits to proton translocation. The sequence is that of ATP synthase subunit c from Bacillus pumilus (strain SAFR-032).